The primary structure comprises 93 residues: Large ribosomal subunit protein bL31 (93 aa).

The disordered stretch occupies residues 68 to 93 (GSADAAADEKKPDAKNNNKDNTSKED). The segment covering 74–93 (ADEKKPDAKNNNKDNTSKED) has biased composition (basic and acidic residues).

Belongs to the bacterial ribosomal protein bL31 family. Type A subfamily. As to quaternary structure, part of the 50S ribosomal subunit.

Functionally, binds the 23S rRNA. This is Large ribosomal subunit protein bL31 from Prochlorococcus marinus (strain MIT 9313).